The following is a 37-amino-acid chain: Large ribosomal subunit protein bL36 (37 aa).

It belongs to the bacterial ribosomal protein bL36 family.

The sequence is that of Large ribosomal subunit protein bL36 from Moorella thermoacetica (strain ATCC 39073 / JCM 9320).